The chain runs to 149 residues: Large ribosomal subunit protein bL9 (149 aa).

The protein belongs to the bacterial ribosomal protein bL9 family.

In terms of biological role, binds to the 23S rRNA. The polypeptide is Large ribosomal subunit protein bL9 (Helicobacter pylori (strain ATCC 700392 / 26695) (Campylobacter pylori)).